We begin with the raw amino-acid sequence, 106 residues long: uncharacterized protein (106 aa).

This is an uncharacterized protein from Rickettsia prowazekii (strain Madrid E).